The following is a 314-amino-acid chain: Ribosomal protein uL3 glutamine methyltransferase (314 aa).

Belongs to the protein N5-glutamine methyltransferase family. PrmB subfamily.

It catalyses the reaction L-glutaminyl-[ribosomal protein uL3] + S-adenosyl-L-methionine = N(5)-methyl-L-glutaminyl-[ribosomal protein uL3] + S-adenosyl-L-homocysteine + H(+). In terms of biological role, methylates large ribosomal subunit protein uL3 on a specific glutamine residue. This Shewanella oneidensis (strain ATCC 700550 / JCM 31522 / CIP 106686 / LMG 19005 / NCIMB 14063 / MR-1) protein is Ribosomal protein uL3 glutamine methyltransferase.